Consider the following 590-residue polypeptide: Proline--tRNA ligase (590 aa).

The protein belongs to the class-II aminoacyl-tRNA synthetase family. ProS type 1 subfamily. As to quaternary structure, homodimer.

It is found in the cytoplasm. The catalysed reaction is tRNA(Pro) + L-proline + ATP = L-prolyl-tRNA(Pro) + AMP + diphosphate. Its function is as follows. Catalyzes the attachment of proline to tRNA(Pro) in a two-step reaction: proline is first activated by ATP to form Pro-AMP and then transferred to the acceptor end of tRNA(Pro). As ProRS can inadvertently accommodate and process non-cognate amino acids such as alanine and cysteine, to avoid such errors it has two additional distinct editing activities against alanine. One activity is designated as 'pretransfer' editing and involves the tRNA(Pro)-independent hydrolysis of activated Ala-AMP. The other activity is designated 'posttransfer' editing and involves deacylation of mischarged Ala-tRNA(Pro). The misacylated Cys-tRNA(Pro) is not edited by ProRS. This chain is Proline--tRNA ligase, found in Leifsonia xyli subsp. xyli (strain CTCB07).